The sequence spans 59 residues: Ribosome biogenesis protein Nop10 (59 aa).

This sequence belongs to the NOP10 family.

Involved in ribosome biogenesis; more specifically in 18S rRNA pseudouridylation and in cleavage of pre-rRNA. The chain is Ribosome biogenesis protein Nop10 from Thermococcus kodakarensis (strain ATCC BAA-918 / JCM 12380 / KOD1) (Pyrococcus kodakaraensis (strain KOD1)).